The primary structure comprises 648 residues: Zinc finger CW-type PWWP domain protein 1 (648 aa).

Disordered regions lie at residues 1-103 and 137-237; these read MMTT…TNAE and VVST…QDHS. 2 stretches are compositionally biased toward basic and acidic residues: residues 61-79 and 88-97; these read KKKE…EQEK and QAEKKEKEKS. A coiled-coil region spans residues 74–109; it reads SREQEKKRKAQINKQAEKKEKEKSSLTNAEFEEIVQ. The segment covering 194-208 has biased composition (basic residues); it reads SKKKSNRLTLSKRKK. Over residues 209 to 237 the composition is skewed to basic and acidic residues; the sequence is EAHEKVEKTQGGHEHRQEDRLKKTVQDHS. The segment at 250–304 adopts a CW-type zinc-finger fold; sequence FGQCLVWVQCSFPNCGKWRRLCGNIDPSVLPDNWSCDQNTDVQYNRCDIPEETWT. Residues Cys259, Cys264, Cys285, and Cys296 each contribute to the Zn(2+) site. Positions 317–383 constitute a PWWP domain; sequence PGSIIWAKQY…VNMLKNFQEL (67 aa). Residues 436–648 form a disordered region; that stretch reads GERKDLQLSG…EDFPVALFGK (213 aa). The segment covering 453 to 471 has biased composition (basic and acidic residues); that stretch reads LEKKEKEEELEKEEGEKTD. Positions 505–516 are enriched in basic residues; that stretch reads TLQRKIMKRSLG. A compositionally biased stretch (basic and acidic residues) spans 585–595; sequence AKEEPRHREPL. A compositionally biased stretch (acidic residues) spans 604–618; sequence LEDEASSDLDLEQLM. Ser636 bears the Phosphoserine mark.

In terms of tissue distribution, testis.

Its subcellular location is the nucleus. It localises to the chromosome. Dual histone methylation reader specific for PRDM9-catalyzed histone marks (H3K4me3 and H3K36me3). Facilitates the repair of PRDM9-induced meiotic double-strand breaks (DSBs). Essential for male fertility and spermatogenesis. Required for meiosis prophase I progression in male but not in female germ cells. This Homo sapiens (Human) protein is Zinc finger CW-type PWWP domain protein 1 (ZCWPW1).